A 289-amino-acid chain; its full sequence is Phosphatidylserine decarboxylase proenzyme (289 aa).

Active-site charge relay system; for autoendoproteolytic cleavage activity residues include aspartate 92, histidine 149, and serine 254. Serine 254 (schiff-base intermediate with substrate; via pyruvic acid; for decarboxylase activity) is an active-site residue. Serine 254 bears the Pyruvic acid (Ser); by autocatalysis mark.

The protein belongs to the phosphatidylserine decarboxylase family. PSD-B subfamily. Prokaryotic type I sub-subfamily. Heterodimer of a large membrane-associated beta subunit and a small pyruvoyl-containing alpha subunit. Requires pyruvate as cofactor. Is synthesized initially as an inactive proenzyme. Formation of the active enzyme involves a self-maturation process in which the active site pyruvoyl group is generated from an internal serine residue via an autocatalytic post-translational modification. Two non-identical subunits are generated from the proenzyme in this reaction, and the pyruvate is formed at the N-terminus of the alpha chain, which is derived from the carboxyl end of the proenzyme. The autoendoproteolytic cleavage occurs by a canonical serine protease mechanism, in which the side chain hydroxyl group of the serine supplies its oxygen atom to form the C-terminus of the beta chain, while the remainder of the serine residue undergoes an oxidative deamination to produce ammonia and the pyruvoyl prosthetic group on the alpha chain. During this reaction, the Ser that is part of the protease active site of the proenzyme becomes the pyruvoyl prosthetic group, which constitutes an essential element of the active site of the mature decarboxylase.

The protein localises to the cell membrane. The catalysed reaction is a 1,2-diacyl-sn-glycero-3-phospho-L-serine + H(+) = a 1,2-diacyl-sn-glycero-3-phosphoethanolamine + CO2. Its pathway is phospholipid metabolism; phosphatidylethanolamine biosynthesis; phosphatidylethanolamine from CDP-diacylglycerol: step 2/2. In terms of biological role, catalyzes the formation of phosphatidylethanolamine (PtdEtn) from phosphatidylserine (PtdSer). The polypeptide is Phosphatidylserine decarboxylase proenzyme (Pseudomonas aeruginosa (strain ATCC 15692 / DSM 22644 / CIP 104116 / JCM 14847 / LMG 12228 / 1C / PRS 101 / PAO1)).